Reading from the N-terminus, the 185-residue chain is Ribosome-recycling factor (185 aa).

It belongs to the RRF family.

The protein localises to the cytoplasm. Its function is as follows. Responsible for the release of ribosomes from messenger RNA at the termination of protein biosynthesis. May increase the efficiency of translation by recycling ribosomes from one round of translation to another. The chain is Ribosome-recycling factor from Campylobacter concisus (strain 13826).